The following is a 485-amino-acid chain: Alpha,alpha-trehalose-phosphate synthase [UDP-forming] (485 aa).

The D-glucose 6-phosphate site is built by Y99 and D153. UDP-binding residues include R290 and K295. Residues R290 and K295 each contribute to the UDP-alpha-D-glucose site. Residue R328 participates in D-glucose 6-phosphate binding. Residues I367 and 393 to 397 (LVSYE) each bind UDP. UDP-alpha-D-glucose contacts are provided by residues I367 and 389–397 (DGMNLVSYE).

Belongs to the glycosyltransferase 20 family.

It catalyses the reaction D-glucose 6-phosphate + UDP-alpha-D-glucose = alpha,alpha-trehalose 6-phosphate + UDP + H(+). The protein operates within carbohydrate biosynthesis. Functionally, synthase catalytic subunit of the trehalose synthase complex that catalyzes the production of trehalose from glucose-6-phosphate and UDP-alpha-D-glucose in a two step process. In Zygosaccharomyces rouxii, this protein is Alpha,alpha-trehalose-phosphate synthase [UDP-forming].